The sequence spans 126 residues: MTGEEAVVVTAVVAPKAGREEEQPPPPAGLGCGARGEPGRGPLEHGQQWKKFLYCEPHKRIKEVLEEERHIKRDECHIKNPAAVALEGIWSIKRNLPVGGLKPGLPSRNSLLPQAKYYSRHGGLRR.

The segment at 13–45 (VAPKAGREEEQPPPPAGLGCGARGEPGRGPLEH) is disordered.

Its subcellular location is the cytoplasm. It is found in the cytoskeleton. The protein localises to the cilium basal body. This is an uncharacterized protein from Homo sapiens (Human).